Reading from the N-terminus, the 487-residue chain is DNA polymerase delta small subunit (487 aa).

The residue at position 1 (Met-1) is an N-acetylmethionine. Ser-20 bears the Phosphoserine mark.

It belongs to the DNA polymerase delta/II small subunit family. In terms of assembly, DNA polymerase delta is a heterotrimer of POL3, POL32 and HYS2.

It localises to the nucleus. It carries out the reaction DNA(n) + a 2'-deoxyribonucleoside 5'-triphosphate = DNA(n+1) + diphosphate. Its function is as follows. DNA polymerase delta (DNA polymerase III) participates in chromosomal DNA replication. It is required during synthesis of the leading and lagging DNA strands at the replication fork and binds at/or near replication origins and moves along DNA with the replication fork. It has 3'-5' proofreading exonuclease activity that correct errors arising during DNA replication. It is also involved in DNA synthesis during DNA repair. The protein is DNA polymerase delta small subunit (POL31) of Saccharomyces cerevisiae (strain ATCC 204508 / S288c) (Baker's yeast).